A 431-amino-acid polypeptide reads, in one-letter code: Levansucrase Lscbeta (431 aa).

Trp-61, Asp-62, Ala-148, Arg-218, and Asp-219 together coordinate sucrose. The Nucleophile role is filled by Asp-62. Glu-303 functions as the Proton donor/acceptor in the catalytic mechanism.

The protein belongs to the glycosyl hydrolase 68 family. In terms of assembly, homodimer.

It catalyses the reaction [6)-beta-D-fructofuranosyl-(2-&gt;](n) alpha-D-glucopyranoside + sucrose = [6)-beta-D-fructofuranosyl-(2-&gt;](n+1) alpha-D-glucopyranoside + D-glucose. Sucrose hydrolase activity is negatively affected by salt concentration. The levan polymerization rate is constant regardless of sucrose concentration. Functionally, catalyzes the synthesis of levan, a fructose polymer, by transferring the fructosyl moiety from sucrose to a growing acceptor molecule. Also displays sucrose hydrolase activity. This Pseudomonas syringae pv. actinidiae protein is Levansucrase Lscbeta.